A 243-amino-acid polypeptide reads, in one-letter code: 1-(5-phosphoribosyl)-5-[(5-phosphoribosylamino)methylideneamino] imidazole-4-carboxamide isomerase (243 aa).

Asp10 serves as the catalytic Proton acceptor. Asp128 serves as the catalytic Proton donor.

The protein belongs to the HisA/HisF family.

The protein resides in the cytoplasm. It catalyses the reaction 1-(5-phospho-beta-D-ribosyl)-5-[(5-phospho-beta-D-ribosylamino)methylideneamino]imidazole-4-carboxamide = 5-[(5-phospho-1-deoxy-D-ribulos-1-ylimino)methylamino]-1-(5-phospho-beta-D-ribosyl)imidazole-4-carboxamide. Its pathway is amino-acid biosynthesis; L-histidine biosynthesis; L-histidine from 5-phospho-alpha-D-ribose 1-diphosphate: step 4/9. The polypeptide is 1-(5-phosphoribosyl)-5-[(5-phosphoribosylamino)methylideneamino] imidazole-4-carboxamide isomerase (Helicobacter hepaticus (strain ATCC 51449 / 3B1)).